Here is a 130-residue protein sequence, read N- to C-terminus: D-ribose pyranase (130 aa).

The active-site Proton donor is the His20. Residues Asp28, His97, and 119 to 121 (YAN) each bind substrate.

Belongs to the RbsD / FucU family. RbsD subfamily. In terms of assembly, homodecamer.

Its subcellular location is the cytoplasm. The catalysed reaction is beta-D-ribopyranose = beta-D-ribofuranose. Its pathway is carbohydrate metabolism; D-ribose degradation; D-ribose 5-phosphate from beta-D-ribopyranose: step 1/2. Its function is as follows. Catalyzes the interconversion of beta-pyran and beta-furan forms of D-ribose. The polypeptide is D-ribose pyranase (Bacillus pumilus (strain SAFR-032)).